The following is a 607-amino-acid chain: Rap1 GTPase-GDP dissociation stimulator 1 (607 aa).

The short motif at 4 to 13 (LSDTLKKLKI) is the Nuclear export signal (NES) element. ARM repeat units lie at residues 89 to 131 (GLIS…DQAG) and 170 to 211 (DSLQ…NLAE). A prevents binding to prenylated RHOA region spans residues 122–170 (EGRSAVDQAGGAQIVIDHLRSLCSITDPANEKLLTVFCGMLMNYSNEND). K230 is subject to N6-acetyllysine. The interval 239-255 (DKREMIFEVLAPLAEND) is interacts with polybasic regions in GTPases. 3 ARM repeats span residues 347 to 390 (DANC…NLAI), 391 to 431 (PVIN…MLID), and 479 to 519 (SKDV…LIAA). The interval 379–428 (HAALSALRNLAIPVINKAKMLSAGVTEAVLKFLKSEMPPVQFKLLGTLRM) is critical for catalytic activity.

Interacts with RABL3. Interacts with RHOT1. As to quaternary structure, interacts with unprenylated RHOA; the interaction is direct. Interacts with RAP1A. Interacts with KRAS. Interacts with RAC1. Interacts with RAP1B. Preferentially interacts with unprenylated GTPases that will become geranylgeranylated. May also interact with prenylated GTPases. In terms of assembly, interacts with prenylated RHOA; the interaction is direct and in a 1:1 stoichiometry. Interacts with RAP1A. Interacts with KRAS. Interacts with RAC1. Interacts with RAP1B. Preferentially interacts with prenylated GTPases. Forms covalent cross-links mediated by transglutaminase TGM2, between a glutamine and the epsilon-amino group of a lysine residue, forming homopolymers and heteropolymers.

It is found in the cytoplasm. Its subcellular location is the cytosol. The protein resides in the endoplasmic reticulum. It localises to the mitochondrion. The protein localises to the nucleus. Its function is as follows. Acts as a GEF (guanine nucleotide exchange factor) for the Rho family of small GTP-binding proteins (G proteins) that stimulates the dissociation of GDP to enable subsequent binding of GTP. Additionally, appears to chaperone the processing and/or trafficking of small GTPases containing a C-terminal polybasic region independently of GEF activity. Targets include RAP1A/RAP1B, RHOA, RHOB, RHOC, RAC1 and KRAS. Regulates mitochondrial dynamics by controlling RHOT function to promote mitochondrial fission during high calcium conditions. Able to promote the Ca(2+) release from the endoplasmic reticulum via both inositol trisphosphate (Ins3P) and ryanodine sensitive receptors leading to a enhanced mitochondrial Ca(2+) uptake. Functionally, acts as a GEF (guanine nucleotide exchange factor) for unprenylated RHOA. Chaperones the entry and passage of small GTPases through the prenylation pathway. Recognizes the last amino acid in the GTPase C-terminal CAAX motif with a preference for 'Leu' over 'Met', indicating involvement in the geranylgeranylation pathway. Acts as a GEF (guanine nucleotide exchange factor) for prenylated RHOA. Acts as a GEF for RHOC. Chaperones the downstream trafficking and/or processing of small newly prenylated GTPases. Escorts RAC1 to the nucleus. The protein is Rap1 GTPase-GDP dissociation stimulator 1 of Homo sapiens (Human).